A 207-amino-acid polypeptide reads, in one-letter code: Large ribosomal subunit protein uL4 (207 aa).

The disordered stretch occupies residues 44–85; sequence MRQGTHKTKNRAEVSGGGRKPWRQKGTGRARQGSIRSPQWRG.

Belongs to the universal ribosomal protein uL4 family. Part of the 50S ribosomal subunit.

One of the primary rRNA binding proteins, this protein initially binds near the 5'-end of the 23S rRNA. It is important during the early stages of 50S assembly. It makes multiple contacts with different domains of the 23S rRNA in the assembled 50S subunit and ribosome. Functionally, forms part of the polypeptide exit tunnel. This is Large ribosomal subunit protein uL4 from Geobacillus thermodenitrificans (strain NG80-2).